The sequence spans 573 residues: SHC-transforming protein 2 (573 aa).

Residues 125–309 (LGPGVSYIVR…LEELAWGDDD (185 aa)) enclose the PID domain. A CH1 region spans residues 310–477 (AAADHNYYNS…PTEEQLRQEP (168 aa)). Phosphotyrosine occurs at positions 316, 317, and 395. In terms of domain architecture, SH2 spans 478–569 (WYHGRMSRRA…ESELHLRGVV (92 aa)).

As to quaternary structure, interacts with the Trk receptors in a phosphotyrosine-dependent manner and MEGF12. Once activated, binds to GRB2. Phosphorylated on tyrosine by the Trk receptors. As to expression, expressed in brain. Expressed at high level in the hypothalamus and at low level in the caudate nucleus.

Functionally, signaling adapter that couples activated growth factor receptors to signaling pathway in neurons. Involved in the signal transduction pathways of neurotrophin-activated Trk receptors in cortical neurons. The sequence is that of SHC-transforming protein 2 (Shc2) from Mus musculus (Mouse).